A 636-amino-acid polypeptide reads, in one-letter code: Chitin synthase VI (636 aa).

4 consecutive transmembrane segments (helical) span residues 23-43, 374-394, 399-419, and 427-447; these read LQWFAFWSFSILLTVPWLFCI, TIRTTALLFFVMVLALLTTTA, LPVGFMAVSLGLNWLLMLYFG, and IWFYPLMFVLNPLFNWYYMVY. The tract at residues 595 to 636 is disordered; sequence QRLRLEQRPRTGPSLNARWQNGPQASETSQGRSQVDDVGIAF. Polar residues predominate over residues 607–627; the sequence is PSLNARWQNGPQASETSQGRS.

Belongs to the chitin synthase family. Class VI subfamily. As to expression, moderately expressed during appressorium formation.

The protein localises to the cell membrane. It carries out the reaction [(1-&gt;4)-N-acetyl-beta-D-glucosaminyl](n) + UDP-N-acetyl-alpha-D-glucosamine = [(1-&gt;4)-N-acetyl-beta-D-glucosaminyl](n+1) + UDP + H(+). In terms of biological role, polymerizes chitin, a structural polymer of the cell wall and septum, by transferring the sugar moiety of UDP-GlcNAc to the non-reducing end of the growing chitin polymer. Contributes to the production of conidia but is the only chitine synthase that does not contribute to the ability of fungal conidia to germinate. Involved in fungal stress tolerances. This chain is Chitin synthase VI, found in Metarhizium acridum (strain CQMa 102).